The chain runs to 497 residues: Probable cytosol aminopeptidase (497 aa).

Mn(2+) contacts are provided by Lys-263 and Asp-268. The active site involves Lys-275. Residues Asp-286, Asp-345, and Glu-347 each coordinate Mn(2+). Arg-349 is a catalytic residue.

This sequence belongs to the peptidase M17 family. It depends on Mn(2+) as a cofactor.

The protein localises to the cytoplasm. The enzyme catalyses Release of an N-terminal amino acid, Xaa-|-Yaa-, in which Xaa is preferably Leu, but may be other amino acids including Pro although not Arg or Lys, and Yaa may be Pro. Amino acid amides and methyl esters are also readily hydrolyzed, but rates on arylamides are exceedingly low.. It catalyses the reaction Release of an N-terminal amino acid, preferentially leucine, but not glutamic or aspartic acids.. Its function is as follows. Presumably involved in the processing and regular turnover of intracellular proteins. Catalyzes the removal of unsubstituted N-terminal amino acids from various peptides. The chain is Probable cytosol aminopeptidase from Brucella ovis (strain ATCC 25840 / 63/290 / NCTC 10512).